Reading from the N-terminus, the 156-residue chain is MFTSKLLTLVLVVQPGRVLLGMKKRGFGAGKWNGFGGKVQTGETIEQAARRELLEESGLTVDTLHKIGNIKFEFIGETELMDVHIFRADNYEGEPAESDEMRPQWFDIDKIPFSQMWADDILWFPLMLQKKRFLGYFKFQGHDVIVEHKLDEVEDL.

A Nudix hydrolase domain is found at 3–132 (TSKLLTLVLV…WFPLMLQKKR (130 aa)). T8 lines the 2-oxo-dATP pocket. O(6)-methyl-dGMP contacts are provided by residues T8, K23, N33, and 35 to 38 (FGGK). K23 is a binding site for 8-oxo-dGTP. 2-oxo-dATP contacts are provided by residues N33 and 35–38 (FGGK). Mg(2+)-binding residues include G36, E52, E55, E56, and E100. The Nudix box motif lies at 37–58 (GKVQTGETIEQAARRELLEESG). 117-120 (WADD) is a 2-oxo-dATP binding site. O(6)-methyl-dGMP is bound at residue 117–120 (WADD).

It belongs to the Nudix hydrolase family. Monomer. Mg(2+) is required as a cofactor.

The protein resides in the cytoplasm. The protein localises to the cytosol. It localises to the mitochondrion matrix. It is found in the nucleus. It carries out the reaction 2-oxo-dATP + H2O = 2-oxo-dAMP + diphosphate + H(+). The catalysed reaction is 2-oxo-ATP + H2O = 2-oxo-AMP + diphosphate + H(+). It catalyses the reaction 8-oxo-dGTP + H2O = 8-oxo-dGMP + diphosphate + H(+). The enzyme catalyses 8-oxo-dATP + H2O = 8-oxo-dAMP + diphosphate + H(+). It carries out the reaction O(6)-methyl-dGTP + H2O = O(6)-methyl-dGMP + diphosphate + H(+). The catalysed reaction is N(6)-methyl-dATP + H2O = N(6)-methyl-dAMP + diphosphate + H(+). It catalyses the reaction N(6)-methyl-ATP + H2O = N(6)-methyl-AMP + diphosphate + H(+). With respect to regulation, inhibited by TH588. Functionally, oxidized purine nucleoside triphosphate hydrolase which is a prominent sanitizer of the oxidized nucleotide pool. Catalyzes the hydrolysis of 2-oxo-dATP (2-hydroxy-dATP) into 2-oxo-dAMP. Also has a significant hydrolase activity toward 2-oxo-ATP, 8-oxo-dGTP and 8-oxo-dATP. Through the hydrolysis of oxidized purine nucleoside triphosphates, prevents their incorporation into DNA and the subsequent transversions A:T to C:G and G:C to T:A. Also catalyzes the hydrolysis of methylated purine nucleoside triphosphate preventing their integration into DNA. Through this antimutagenic activity protects cells from oxidative stress. This is Oxidized purine nucleoside triphosphate hydrolase (nudt1) from Danio rerio (Zebrafish).